The chain runs to 137 residues: Large ribosomal subunit protein uL16c (137 aa).

Belongs to the universal ribosomal protein uL16 family. Part of the 50S ribosomal subunit.

Its subcellular location is the plastid. It is found in the chloroplast. In Thalassiosira pseudonana (Marine diatom), this protein is Large ribosomal subunit protein uL16c.